A 1111-amino-acid chain; its full sequence is Cellulose synthase-like protein D4 (1111 aa).

Disordered stretches follow at residues 1 to 26 (MAST…KFAR) and 175 to 202 (DYSS…MMKR). A compositionally biased stretch (polar residues) spans 192-202 (GNNNNMSMMKR). Transmembrane regions (helical) follow at residues 266-286 (AIIS…CFFL) and 297-317 (AIWL…SWIL). Catalysis depends on residues Asp397 and Asp809. Transmembrane regions (helical) follow at residues 891–911 (LFLI…QFIV), 914–934 (LSIS…GLAV), 963–983 (LYAV…SFTL), 1007–1027 (LMIP…VAFI), 1040–1060 (LIGG…FAKG), and 1070–1090 (TIVF…WTAI).

It belongs to the glycosyltransferase 2 family. Plant cellulose synthase-like D subfamily.

Its subcellular location is the golgi apparatus membrane. In terms of biological role, thought to be a Golgi-localized beta-glycan synthase that polymerize the backbones of noncellulosic polysaccharides (hemicelluloses) of plant cell wall. This chain is Cellulose synthase-like protein D4 (CSLD4), found in Arabidopsis thaliana (Mouse-ear cress).